A 333-amino-acid polypeptide reads, in one-letter code: Phosphoribosylformylglycinamidine cyclo-ligase (333 aa).

The protein belongs to the AIR synthase family.

The protein localises to the cytoplasm. The enzyme catalyses 2-formamido-N(1)-(5-O-phospho-beta-D-ribosyl)acetamidine + ATP = 5-amino-1-(5-phospho-beta-D-ribosyl)imidazole + ADP + phosphate + H(+). The protein operates within purine metabolism; IMP biosynthesis via de novo pathway; 5-amino-1-(5-phospho-D-ribosyl)imidazole from N(2)-formyl-N(1)-(5-phospho-D-ribosyl)glycinamide: step 2/2. The polypeptide is Phosphoribosylformylglycinamidine cyclo-ligase (Methanosarcina barkeri (strain Fusaro / DSM 804)).